We begin with the raw amino-acid sequence, 126 residues long: Large ribosomal subunit protein bL17 (126 aa).

Belongs to the bacterial ribosomal protein bL17 family. As to quaternary structure, part of the 50S ribosomal subunit. Contacts protein L32.

The polypeptide is Large ribosomal subunit protein bL17 (Lysinibacillus sphaericus (strain C3-41)).